The primary structure comprises 215 residues: Calcium-binding protein 7 (215 aa).

Topologically, residues 1–188 (MPFHPVTAAL…QIRQTCVRKS (188 aa)) are cytoplasmic. 2 EF-hand domains span residues 33–68 (DELEEIREAFKVFDRDGNGFISKQELGTAMRSLGYM) and 69–104 (PNEVELEVIIQRLDMDGDGQVDFEEFVTLLGPKLST). Residues D46, D48, N50, E57, D82, D84, D86, Q88, and E93 each contribute to the Ca(2+) site. The chain crosses the membrane as a helical; Anchor for type IV membrane protein span at residues 189 to 209 (LICAFAIAFIISVMLIAANQV). Over 210–215 (LRSGMK) the chain is Extracellular.

Interacts with PI4KB. This binding competes with FREQ/NCS1 binding in a calcium-dependent manner.

It localises to the golgi apparatus. It is found in the trans-Golgi network membrane. The protein resides in the cytoplasm. Its subcellular location is the perinuclear region. The protein localises to the cell membrane. In terms of biological role, negatively regulates Golgi-to-plasma membrane trafficking by interacting with PI4KB and inhibiting its activity. In Homo sapiens (Human), this protein is Calcium-binding protein 7 (CABP7).